The primary structure comprises 895 residues: La RNA-binding domain-containing protein LHP1 (895 aa).

5 disordered regions span residues 24 to 265 (ANGN…PPPS), 285 to 344 (SATS…HDAT), 359 to 590 (GEDK…LGHG), 796 to 857 (PDAA…AQDV), and 870 to 895 (VNGE…NYEQ). Positions 31 to 75 (SSPSSSSSATPEPTSLSSSTSGKKAFSTATSKSGQQKQGSSPQPG) are enriched in low complexity. Over residues 95–143 (QRTDRSEEKEKRGSSSKNWRERSHRDEKNQDDGEKRNGRERSKKEKGDK) the composition is skewed to basic and acidic residues. Residues 152-170 (SATSSEKTAKSLSSSTKNA) are compositionally biased toward low complexity. 2 stretches are compositionally biased toward polar residues: residues 172–184 (GVTS…NPIA) and 192–216 (KAQN…STIN). Over residues 228–244 (DNWRARPAKVEKNEKTE) the composition is skewed to basic and acidic residues. Positions 251–260 (QAQPQPQRQL) are enriched in low complexity. The span at 296–314 (KSDKEKSLTNGMVKEEDSG) shows a compositional bias: basic and acidic residues. A compositionally biased stretch (low complexity) spans 325 to 336 (AAAAAAAGTSST). Composition is skewed to basic and acidic residues over residues 359 to 371 (GEDK…ERLN), 405 to 428 (HAAE…REGG), 452 to 468 (EGKK…DGHA), and 485 to 495 (GDVKETKEGDA). Residues 496–508 (RSASQQESSSHRS) are compositionally biased toward low complexity. Over residues 510-521 (PSISASANTGID) the composition is skewed to polar residues. Residues 563–572 (RGSFGGGRAR) show a composition bias toward gly residues. Positions 706 to 796 (VPNLDPLRFY…GAESHRWVLP (91 aa)) constitute an HTH La-type RNA-binding domain. Position 847 is a phosphoserine (serine 847). The segment covering 873–884 (EIKEKEEVKAME) has biased composition (basic and acidic residues). Residues 885–895 (NEGEESENYEQ) show a composition bias toward acidic residues.

Functionally, may act as an RNA-binding protein. This is La RNA-binding domain-containing protein LHP1 from Cryptococcus neoformans var. grubii serotype A (strain H99 / ATCC 208821 / CBS 10515 / FGSC 9487) (Filobasidiella neoformans var. grubii).